A 78-amino-acid polypeptide reads, in one-letter code: DNA-directed RNA polymerase subunit Rpo5 (78 aa).

The protein belongs to the archaeal Rpo5/eukaryotic RPB5 RNA polymerase subunit family. Part of the RNA polymerase complex.

Its subcellular location is the cytoplasm. The enzyme catalyses RNA(n) + a ribonucleoside 5'-triphosphate = RNA(n+1) + diphosphate. Its function is as follows. DNA-dependent RNA polymerase (RNAP) catalyzes the transcription of DNA into RNA using the four ribonucleoside triphosphates as substrates. In Methanocaldococcus jannaschii (strain ATCC 43067 / DSM 2661 / JAL-1 / JCM 10045 / NBRC 100440) (Methanococcus jannaschii), this protein is DNA-directed RNA polymerase subunit Rpo5.